Reading from the N-terminus, the 507-residue chain is uncharacterized protein (507 aa).

Low complexity predominate over residues 1–12; that stretch reads MEKSISSISKAS. The segment at 1-20 is disordered; the sequence is MEKSISSISKASMNSDEKLD. Helical transmembrane passes span 57 to 74, 100 to 120, 126 to 146, 157 to 177, 189 to 209, 221 to 241, 283 to 303, 326 to 346, 353 to 373, 379 to 399, 416 to 436, and 445 to 465; these read FDFRILPLLALLYLFNAL, IMISIFYIPFVLCAFPFSYLY, ARILPFFMLSFGAMSLCQAAV, WFLGMAESAVLPGVVYYLTTF, IFYAAANVSSAFGGLLAYGVF, YLFLIEGGVTFLCAIVIFLVL, VFKHPIAILWLLEEMALGVPL, LMTVAPAISGAIWLLVFAFIS, GIVLIAAISTTMIGFIVYGSI, IGVSYFACFLMTAGAAASSVL, VFTSVGVPLANVMGLVSANIF, and VPALGITAGFGGLGILLVASI.

The protein belongs to the major facilitator superfamily. Allantoate permease family.

It localises to the endoplasmic reticulum. Its subcellular location is the membrane. This is an uncharacterized protein from Schizosaccharomyces pombe (strain 972 / ATCC 24843) (Fission yeast).